A 482-amino-acid polypeptide reads, in one-letter code: Glutamyl-tRNA(Gln) amidotransferase subunit A (482 aa).

Residues K75 and S150 each act as charge relay system in the active site. Catalysis depends on S174, which acts as the Acyl-ester intermediate.

Belongs to the amidase family. GatA subfamily. As to quaternary structure, heterotrimer of A, B and C subunits.

The catalysed reaction is L-glutamyl-tRNA(Gln) + L-glutamine + ATP + H2O = L-glutaminyl-tRNA(Gln) + L-glutamate + ADP + phosphate + H(+). In terms of biological role, allows the formation of correctly charged Gln-tRNA(Gln) through the transamidation of misacylated Glu-tRNA(Gln) in organisms which lack glutaminyl-tRNA synthetase. The reaction takes place in the presence of glutamine and ATP through an activated gamma-phospho-Glu-tRNA(Gln). In Thermosynechococcus vestitus (strain NIES-2133 / IAM M-273 / BP-1), this protein is Glutamyl-tRNA(Gln) amidotransferase subunit A.